Consider the following 549-residue polypeptide: Putative acyl-CoA synthetase YngI (549 aa).

ATP-binding positions include 198-206, Asp423, Arg438, and Lys529; that span reads TSGTTGFPK.

This sequence belongs to the ATP-dependent AMP-binding enzyme family.

This is Putative acyl-CoA synthetase YngI (yngI) from Bacillus subtilis (strain 168).